The chain runs to 339 residues: DNA-directed RNA polymerase subunit alpha (339 aa).

Positions 1 to 233 (MVREEVAGST…DLFLPFLHAE (233 aa)) are alpha N-terminal domain (alpha-NTD). Positions 266 to 339 (GIPLNCIFID…IDLLKNKLSF (74 aa)) are alpha C-terminal domain (alpha-CTD).

This sequence belongs to the RNA polymerase alpha chain family. In terms of assembly, in plastids the minimal PEP RNA polymerase catalytic core is composed of four subunits: alpha, beta, beta', and beta''. When a (nuclear-encoded) sigma factor is associated with the core the holoenzyme is formed, which can initiate transcription.

The protein resides in the plastid. It is found in the chloroplast. The enzyme catalyses RNA(n) + a ribonucleoside 5'-triphosphate = RNA(n+1) + diphosphate. Its function is as follows. DNA-dependent RNA polymerase catalyzes the transcription of DNA into RNA using the four ribonucleoside triphosphates as substrates. The protein is DNA-directed RNA polymerase subunit alpha of Elymus canadensis (Canada wild rye).